Reading from the N-terminus, the 147-residue chain is Microsomal glutathione S-transferase 2 (147 aa).

3 helical membrane passes run 6–26 (SLLA…AWRV), 62–82 (VFIV…AACL), and 107–127 (GFRL…LGVA).

Homotrimer.

It localises to the endoplasmic reticulum membrane. Its subcellular location is the microsome membrane. The enzyme catalyses RX + glutathione = an S-substituted glutathione + a halide anion + H(+). It catalyses the reaction 1-chloro-2,4-dinitrobenzene + glutathione = 2,4-dinitrophenyl-S-glutathione + chloride + H(+). The catalysed reaction is leukotriene C4 = leukotriene A4 + glutathione. It carries out the reaction (5S)-hydroperoxy-(6E,8Z,11Z,14Z)-eicosatetraenoate + 2 glutathione = (5S)-hydroxy-(6E,8Z,11Z,14Z)-eicosatetraenoate + glutathione disulfide + H2O. With respect to regulation, each monomer binds on GSH molecule but only one subunit is catalytically active. Catalyzes several different glutathione-dependent reactions. Catalyzes the glutathione-dependent reduction of lipid hydroperoxides, such as 5-HPETE. Has glutathione transferase activity, toward xenobiotic electrophiles, such as 1-chloro-2, 4-dinitrobenzene (CDNB). Also catalyzes the conjugation of leukotriene A4 with reduced glutathione to form leukotriene C4 (LTC4). Involved in oxidative DNA damage induced by ER stress and anticancer agents by activating LTC4 biosynthetic machinery in nonimmune cells. In Mus musculus (Mouse), this protein is Microsomal glutathione S-transferase 2.